The primary structure comprises 78 residues: Large ribosomal subunit protein bL28 (78 aa).

The protein belongs to the bacterial ribosomal protein bL28 family.

The protein is Large ribosomal subunit protein bL28 of Methylobacillus flagellatus (strain ATCC 51484 / DSM 6875 / VKM B-1610 / KT).